Reading from the N-terminus, the 292-residue chain is Universal stress protein Mb2346c (292 aa).

This sequence belongs to the universal stress protein A family.

This is Universal stress protein Mb2346c from Mycobacterium bovis (strain ATCC BAA-935 / AF2122/97).